Reading from the N-terminus, the 132-residue chain is Small ribosomal subunit protein uS8c (132 aa).

It belongs to the universal ribosomal protein uS8 family. In terms of assembly, part of the 30S ribosomal subunit.

The protein localises to the plastid. The protein resides in the chloroplast. One of the primary rRNA binding proteins, it binds directly to 16S rRNA central domain where it helps coordinate assembly of the platform of the 30S subunit. This is Small ribosomal subunit protein uS8c (rps8) from Nymphaea alba (White water-lily).